The primary structure comprises 1217 residues: MKGMSHEPKSPSLGMLSTATRTTATVNPLTPSPLNGALVPSGSPATSSALSAQAAPSSSFAAALRKLAKQAEEPRGSSLSSESSPVSSPATNHSSPASTPKRVPMGPIIVPPGGHSVPSTPPVVTIAPTKTVNGVWRSESRQDAGSRSSSGGRERLIVEPPLPQEKAGGPAIPSHLLSTPYPFGLSPSSVVQDSRFPPLNLQRPVHHVVPPSTVTEDYLRSFRPYHTTDDLRMSSLPPLGLDPATAAAYYHPSYLAPHPFPHPAFRMDDSYCLSALRSPFYPIPTPGSLPPLHPSAMHLHLSGVRYPPELSHSSLAALHSERMSGLSAERLQMDEELRREREREREREREREADREREKEREREREKEREQEKEREREKERERELERQREQRAREKELLAAKALEPSFLPVAELHGLRGHATEERGKPSEQLTPTRAEKLKDAGLQAPKPVQHPLHPVPTPHHTVPSLISNHGIFSLPSSSAATALLIQRTNEEEKWLARQRRLRQEKEDRQSQVSEFRQQVLEQHLDMGRPPVPAEAEHRPESTTRPGPNRHEPGGRDPPQHFGGPPPLISPKPQLHAAPTALWNPVSLMDNTLETRRAESHSLHSHPAAFEPSRQAAVPLVKVERVFCPEKAEEGPRKREPAPLDKYQPPPPPPREGGSLEHQPFLPGPGPFLAELEKSTQTILGQQRASLPQAATFGELSGPLKPGSPYRPPVPRAPDPAYIYDEFLQQRRRLVSKLDLEERRRREAQEKGYYYDLDDSYDESDEEEVRAHLRCVAEQPPLKLDTSSEKLEFLQLFGLTTQQQKEELVAQKRRKRRRMLRERSPSPPTIQSKRQTPSPRLALSTRYSPDEMNNSPNFEEKKKFLTIFNLTHISAEKRKDKERLVEMLRAMKQKALSAAVADSLTNSPRDSPAVSLSEPATQQASLDVEKPVGVAASLSDIPKAAEPGKLEQVRPQELSRVQELAPASGEKARLSEAPGGKKSLSMLHYIRGAAPKDIPVPLSHSTNGKSKPWEPFVAEEFAHQFHESVLQSTQKALQKHKGSVAVLSAEQNHKVDTSVHYNIPELQSSSRAPPPQHNGQQEPPTARKGPPTQELDRDSEEEEEEDDEDGEDEEEVPKRKWQGIEAVFEAYQEHIEEQNLERQVLQTQCRRLEARHYSLSLTAEQLSHSVAELRSQKQKMVSERERLQAELDHLRKCLALPAMHWPRGYLKGYPR.

Residues 1 to 155 (MKGMSHEPKS…SRSSSGGRER (155 aa)) form a disordered region. Phosphoserine is present on S10. The span at 15–33 (MLSTATRTTATVNPLTPSP) shows a compositional bias: polar residues. Low complexity-rich tracts occupy residues 43-63 (SPATSSALSAQAAPSSSFAAA) and 76-89 (GSSLSSESSPVSSP). Residues S84 and S95 each carry the phosphoserine modification. The segment covering 103 to 114 (VPMGPIIVPPGG) has biased composition (low complexity). At R305 the chain carries Asymmetric dimethylarginine. Residues 321–403 (ERMSGLSAER…REKELLAAKA (83 aa)) adopt a coiled-coil conformation. Disordered stretches follow at residues 324 to 385 (SGLS…EREL) and 418 to 465 (RGHA…HHTV). The span at 331–385 (LQMDEELRREREREREREREREADREREKEREREREKEREQEKEREREKEREREL) shows a compositional bias: basic and acidic residues. T433 carries the phosphothreonine modification. Positions 450 to 465 (PVQHPLHPVPTPHHTV) are enriched in low complexity. An N6-acetyllysine modification is found at K496. 3 disordered regions span residues 526–579 (HLDM…QLHA), 633–675 (KAEE…GPFL), and 699–720 (FGELSGPLKPGSPYRPPVPRAP). Composition is skewed to basic and acidic residues over residues 551-561 (NRHEPGGRDPP) and 633-645 (KAEEGPRKREPAP). Pro residues predominate over residues 711 to 720 (PYRPPVPRAP). K739 carries the N6-acetyllysine modification. S766 is modified (phosphoserine). 4 disordered regions span residues 807–858 (KEEL…NNSP), 903–930 (ADSLTNSPRDSPAVSLSEPATQQASLDV), 948–981 (EPGKLEQVRPQELSRVQELAPASGEKARLSEAPG), and 1068–1122 (LQSS…PKRK). Basic residues predominate over residues 813-822 (QKRRKRRRML). Phosphoserine occurs at positions 826 and 828. Composition is skewed to polar residues over residues 831–840 (TIQSKRQTPS) and 847–858 (TRYSPDEMNNSP). S857 carries the post-translational modification Phosphoserine. T907 carries the post-translational modification Phosphothreonine. At S909 the chain carries Phosphoserine. Residues 1068 to 1085 (LQSSSRAPPPQHNGQQEP) are compositionally biased toward polar residues. Over residues 1099-1117 (RDSEEEEEEDDEDGEDEEE) the composition is skewed to acidic residues. S1101 carries the post-translational modification Phosphoserine. Positions 1127–1201 (EAVFEAYQEH…ELDHLRKCLA (75 aa)) form a coiled coil.

May be a component of a BHC histone deacetylase complex that contains HDAC1, HDAC2, HMG20B/BRAF35, KDM1A, RCOR1/CoREST, PHF21A/BHC80, ZMYM2, ZNF217, ZMYM3, GSE1 and GTF2I.

The protein is Genetic suppressor element 1 (GSE1) of Homo sapiens (Human).